Here is a 712-residue protein sequence, read N- to C-terminus: Ribosomal RNA large subunit methyltransferase K/L (712 aa).

One can recognise a THUMP domain in the interval 46 to 157 (GAYQALLHSR…REKLIVSLDL (112 aa)).

This sequence belongs to the methyltransferase superfamily. RlmKL family.

Its subcellular location is the cytoplasm. The catalysed reaction is guanosine(2445) in 23S rRNA + S-adenosyl-L-methionine = N(2)-methylguanosine(2445) in 23S rRNA + S-adenosyl-L-homocysteine + H(+). The enzyme catalyses guanosine(2069) in 23S rRNA + S-adenosyl-L-methionine = N(2)-methylguanosine(2069) in 23S rRNA + S-adenosyl-L-homocysteine + H(+). Its function is as follows. Specifically methylates the guanine in position 2445 (m2G2445) and the guanine in position 2069 (m7G2069) of 23S rRNA. This chain is Ribosomal RNA large subunit methyltransferase K/L, found in Haemophilus ducreyi (strain 35000HP / ATCC 700724).